Consider the following 545-residue polypeptide: Glucose-6-phosphate isomerase (545 aa).

E351 functions as the Proton donor in the catalytic mechanism. Active-site residues include H382 and K510.

It belongs to the GPI family.

Its subcellular location is the cytoplasm. The enzyme catalyses alpha-D-glucose 6-phosphate = beta-D-fructose 6-phosphate. Its pathway is carbohydrate biosynthesis; gluconeogenesis. It functions in the pathway carbohydrate degradation; glycolysis; D-glyceraldehyde 3-phosphate and glycerone phosphate from D-glucose: step 2/4. Catalyzes the reversible isomerization of glucose-6-phosphate to fructose-6-phosphate. The protein is Glucose-6-phosphate isomerase of Shewanella denitrificans (strain OS217 / ATCC BAA-1090 / DSM 15013).